Here is a 397-residue protein sequence, read N- to C-terminus: MSESVHTNTSLWSKGMKAVIVAQFLSAFGDNALLFATLALLKAQFYPEWSQPILQMVFVGAYILFAPFVGQVADSFAKGRVMMFANGLKLLGAASICFGINPFLGYTLVGVGAAAYSPAKYGILGELTTGSKLVKANGLMEASTIAAILLGSVAGGVLADWHVLVALAACALAYGGAVVANIYIPKLAAARPGQSWNLINMTRSFLNACTSLWRNGETRFSLVGTSLFWGAGVTLRFLLVLWVPVALGITDNATPTYLNAMVAIGIVVGAGAAAKLVTLETMSRCMPAGILIGVVVLIFSLQHELLPAYALLMLIGVMGGFFVVPLNALLQERGKKSVGAGNAIAVQNLGENSAMLLMLGIYSLAVMVGIPVVPIGIGFGALFALAITALWIWQRRH.

Over 1–17 (MSESVHTNTSLWSKGMK) the chain is Periplasmic. A helical membrane pass occupies residues 18–38 (AVIVAQFLSAFGDNALLFATL). Over 39–52 (ALLKAQFYPEWSQP) the chain is Cytoplasmic. The chain crosses the membrane as a helical span at residues 53–73 (ILQMVFVGAYILFAPFVGQVA). Residues 74–90 (DSFAKGRVMMFANGLKL) lie on the Periplasmic side of the membrane. Residues 91–111 (LGAASICFGINPFLGYTLVGV) traverse the membrane as a helical segment. Residues 112-144 (GAAAYSPAKYGILGELTTGSKLVKANGLMEAST) lie on the Cytoplasmic side of the membrane. The chain crosses the membrane as a helical span at residues 145–165 (IAAILLGSVAGGVLADWHVLV). Residue Ala-166 is a topological domain, periplasmic. The chain crosses the membrane as a helical span at residues 167 to 187 (LAACALAYGGAVVANIYIPKL). Residues 188 to 226 (AAARPGQSWNLINMTRSFLNACTSLWRNGETRFSLVGTS) are Cytoplasmic-facing. A helical membrane pass occupies residues 227–247 (LFWGAGVTLRFLLVLWVPVAL). The Periplasmic segment spans residues 248–256 (GITDNATPT). A helical membrane pass occupies residues 257–277 (YLNAMVAIGIVVGAGAAAKLV). Topologically, residues 278–280 (TLE) are cytoplasmic. A helical transmembrane segment spans residues 281–301 (TMSRCMPAGILIGVVVLIFSL). At 302-304 (QHE) the chain is on the periplasmic side. The chain crosses the membrane as a helical span at residues 305-325 (LLPAYALLMLIGVMGGFFVVP). Residues 326–343 (LNALLQERGKKSVGAGNA) are Cytoplasmic-facing. Residues 344–364 (IAVQNLGENSAMLLMLGIYSL) traverse the membrane as a helical segment. Residues 365-366 (AV) are Periplasmic-facing. A helical transmembrane segment spans residues 367–387 (MVGIPVVPIGIGFGALFALAI). At 388–397 (TALWIWQRRH) the chain is on the cytoplasmic side.

It belongs to the major facilitator superfamily. LplT (TC 2.A.1.42) family.

It is found in the cell inner membrane. In terms of biological role, catalyzes the facilitated diffusion of 2-acyl-glycero-3-phosphoethanolamine (2-acyl-GPE) into the cell. The sequence is that of Lysophospholipid transporter LplT from Shigella sonnei (strain Ss046).